The chain runs to 473 residues: tRNA modification GTPase MnmE (473 aa).

The (6S)-5-formyl-5,6,7,8-tetrahydrofolate site is built by arginine 30, glutamate 95, and arginine 134. One can recognise a TrmE-type G domain in the interval 230-394 (GVAAVIAGRP…LKSTMAGMVE (165 aa)). GTP contacts are provided by residues 240-245 (NAGKST), 259-265 (SHMPGTT), and 284-287 (DTAG). Residues serine 244 and threonine 265 each contribute to the Mg(2+) site. Lysine 473 lines the (6S)-5-formyl-5,6,7,8-tetrahydrofolate pocket.

The protein belongs to the TRAFAC class TrmE-Era-EngA-EngB-Septin-like GTPase superfamily. TrmE GTPase family. As to quaternary structure, homodimer. Heterotetramer of two MnmE and two MnmG subunits. Requires K(+) as cofactor.

It is found in the cytoplasm. Functionally, exhibits a very high intrinsic GTPase hydrolysis rate. Involved in the addition of a carboxymethylaminomethyl (cmnm) group at the wobble position (U34) of certain tRNAs, forming tRNA-cmnm(5)s(2)U34. In Chlorobium phaeovibrioides (strain DSM 265 / 1930) (Prosthecochloris vibrioformis (strain DSM 265)), this protein is tRNA modification GTPase MnmE.